The primary structure comprises 120 residues: Large ribosomal subunit protein uL18 (120 aa).

The protein belongs to the universal ribosomal protein uL18 family. As to quaternary structure, part of the 50S ribosomal subunit; part of the 5S rRNA/L5/L18/L25 subcomplex. Contacts the 5S and 23S rRNAs.

Its function is as follows. This is one of the proteins that bind and probably mediate the attachment of the 5S RNA into the large ribosomal subunit, where it forms part of the central protuberance. The protein is Large ribosomal subunit protein uL18 of Clostridium botulinum (strain Eklund 17B / Type B).